A 186-amino-acid chain; its full sequence is Ribosome-recycling factor (186 aa).

The protein belongs to the RRF family.

It localises to the cytoplasm. Responsible for the release of ribosomes from messenger RNA at the termination of protein biosynthesis. May increase the efficiency of translation by recycling ribosomes from one round of translation to another. The chain is Ribosome-recycling factor from Burkholderia thailandensis (strain ATCC 700388 / DSM 13276 / CCUG 48851 / CIP 106301 / E264).